The following is a 430-amino-acid chain: Adenylosuccinate synthetase (430 aa).

Residues 13-19 (GDEGKGK) and 41-43 (GHT) contribute to the GTP site. Aspartate 14 functions as the Proton acceptor in the catalytic mechanism. Mg(2+) is bound by residues aspartate 14 and glycine 41. Residues 14-17 (DEGK), 39-42 (NAGH), threonine 130, arginine 144, glutamine 225, threonine 240, and arginine 304 contribute to the IMP site. The active-site Proton donor is the histidine 42. 300 to 306 (ASTGRPR) serves as a coordination point for substrate. GTP contacts are provided by residues arginine 306, 332–334 (KLD), and 414–416 (STG).

It belongs to the adenylosuccinate synthetase family. In terms of assembly, homodimer. Mg(2+) serves as cofactor.

It is found in the cytoplasm. It carries out the reaction IMP + L-aspartate + GTP = N(6)-(1,2-dicarboxyethyl)-AMP + GDP + phosphate + 2 H(+). Its pathway is purine metabolism; AMP biosynthesis via de novo pathway; AMP from IMP: step 1/2. Plays an important role in the de novo pathway of purine nucleotide biosynthesis. Catalyzes the first committed step in the biosynthesis of AMP from IMP. The protein is Adenylosuccinate synthetase of Xanthomonas oryzae pv. oryzae (strain PXO99A).